The primary structure comprises 304 residues: Glutaminase (304 aa).

Residues Ser61, Asn113, Glu158, Asn165, Tyr189, Tyr240, and Val258 each coordinate substrate.

The protein belongs to the glutaminase family. In terms of assembly, homotetramer.

The catalysed reaction is L-glutamine + H2O = L-glutamate + NH4(+). The chain is Glutaminase from Fusobacterium nucleatum subsp. nucleatum (strain ATCC 25586 / DSM 15643 / BCRC 10681 / CIP 101130 / JCM 8532 / KCTC 2640 / LMG 13131 / VPI 4355).